A 304-amino-acid polypeptide reads, in one-letter code: Glyceraldehyde-3-phosphate dehydrogenase 2 (304 aa).

NAD(+)-binding positions include 1–2, aspartate 22, and arginine 67; that span reads RI. Residues 138-140, threonine 169, 198-199, and arginine 221 contribute to the D-glyceraldehyde 3-phosphate site; these read SCT and TG. The Nucleophile role is filled by cysteine 139. Residue asparagine 303 coordinates NAD(+).

This sequence belongs to the glyceraldehyde-3-phosphate dehydrogenase family. In terms of assembly, homotetramer.

Its subcellular location is the cytoplasm. It catalyses the reaction D-glyceraldehyde 3-phosphate + phosphate + NAD(+) = (2R)-3-phospho-glyceroyl phosphate + NADH + H(+). The protein operates within carbohydrate degradation; glycolysis; pyruvate from D-glyceraldehyde 3-phosphate: step 1/5. This Drosophila subobscura (Fruit fly) protein is Glyceraldehyde-3-phosphate dehydrogenase 2 (Gapdh2).